A 1097-amino-acid polypeptide reads, in one-letter code: Protein STICHEL-like 3 (1097 aa).

Disordered stretches follow at residues 1-22 (MTTTTTTTTRVASSSSTRNNRI), 74-168 (SLRD…YRIG), 220-293 (NVRP…GFGE), 321-358 (GRSLSCGMSDSKGGRKGETNERNGSDKMMIQSDDDSSS), and 400-436 (DSDLASEGRSGEKKHKKKSHVNARHRHRQQHQSLTEK). Residues 10 to 20 (RVASSSSTRNN) are compositionally biased toward polar residues. A compositionally biased stretch (basic and acidic residues) spans 95–113 (LPKKGDLVEGGRRSVDLKK). The segment covering 126–136 (PVVNFGTSKVT) has biased composition (polar residues). Residues 137 to 168 (PSDERSGPVSGERDSGRRVKREESSRKSYRIG) are compositionally biased toward basic and acidic residues. A compositionally biased stretch (gly residues) spans 227–241 (YGGGGGGGNTRGCAG). Residues 245-259 (RPKRRKFRGTRRVRG) are compositionally biased toward basic residues. 2 stretches are compositionally biased toward basic and acidic residues: residues 281-291 (VEKHDGEKEGF) and 332-345 (KGGRKGETNERNGS). A compositionally biased stretch (low complexity) spans 346-358 (DKMMIQSDDDSSS). Residues 411–429 (EKKHKKKSHVNARHRHRQQ) are compositionally biased toward basic residues. 472–479 (GPNGTGKT) lines the ATP pocket. Zn(2+)-binding residues include cysteine 491, cysteine 500, cysteine 503, and cysteine 506. Residues 742 to 770 (KEDMEKLRQALKTLSEAEKQLRVSNDKLT) are a coiled coil. 3 disordered regions span residues 790–828 (SSTADTGGRESSDHHLDPSSDAAGGRSSGLDRRRGDSRK), 913–932 (DPRNNVHHHHHHPTVKDKSL), and 956–1003 (VTES…SQSI). Composition is skewed to basic and acidic residues over residues 796-807 (GGRESSDHHLDP) and 818-828 (GLDRRRGDSRK). Polar residues predominate over residues 993-1003 (ASQSQNQSQSI).

Belongs to the DnaX/STICHEL family.

The protein is Protein STICHEL-like 3 of Arabidopsis thaliana (Mouse-ear cress).